We begin with the raw amino-acid sequence, 199 residues long: MNDFTLNAEVRSDLGKGASRRLRRLASLVPAVVYGGDKAPESISMLAKEVAKLLENEAAYSHIIELNVGGTKQNVVIKALQRHPAKGHVMHADFVRVVAGQKLTAIVPVHFINEAAPVKKGGEISHVIAEIEVSCLPKDLPEFIEVDLADAEIGTIVHLSDIKAPKGVEFVALAHGNDLAVANVHAPRVAPEAAEGAAE.

It belongs to the bacterial ribosomal protein bL25 family. CTC subfamily. In terms of assembly, part of the 50S ribosomal subunit; part of the 5S rRNA/L5/L18/L25 subcomplex. Contacts the 5S rRNA. Binds to the 5S rRNA independently of L5 and L18.

Functionally, this is one of the proteins that binds to the 5S RNA in the ribosome where it forms part of the central protuberance. This is Large ribosomal subunit protein bL25 from Pseudomonas fluorescens (strain ATCC BAA-477 / NRRL B-23932 / Pf-5).